Consider the following 105-residue polypeptide: MAARKTYILKLYVAGNTPNSMRALNTLREILENEFKGVYALKVIDVLKQPQLAEEDKILATPTLAKILPPPVRRIIGDLSDREKVLIGLDLLFDELTETEYSGDK.

It belongs to the KaiB family. In terms of assembly, may undergo a major conformational rearrangment; in the free state forms homooligomers. When bound to KaiC switches to a monomeric thioredoxin-fold (KaiB(fs)). The active oscillator complex is probably KaiC(6):KaiB(6).

Functionally, component of the KaiBC clock protein complex, which constitutes the main circadian regulator in cyanobacteria; it may modify the ATPase activity of KaiC. Its function is as follows. May be a metamorphic protein which reversibly switches between an inactive tetrameric fold and a rare, thioredoxin-like monomeric fold (KaiB(fs)). KaiB(fs) binds phospho-KaiC, and perhaps clock output effectors. The polypeptide is Circadian clock oscillator protein KaiB (Prochlorococcus marinus (strain MIT 9312)).